We begin with the raw amino-acid sequence, 278 residues long: Cytoplasmic envelopment protein 1 (278 aa).

It belongs to the herpesviridae cytoplasmic envelopment protein 1 family.

It is found in the virion. Its subcellular location is the virion tegument. It localises to the host cytoplasm. The protein resides in the host Golgi apparatus. Plays a critical role in cytoplasmic virus egress. Participates in the final step of tegumentation and envelope acquisition within the host cytoplasm. This chain is Cytoplasmic envelopment protein 1 (ORF42), found in Homo sapiens (Human).